The following is a 261-amino-acid chain: MLLGVNIDHIAVLREARKINDPNPLDALSICKLSGAEQITIHLREDRRHIHDNDAKAIIEQSSLPVNLECSINSDIIDIVCKLKPSRATLVPENRNEVTTEGGLDIKGNFEKLQKVIDKLHANEIEVSLFIDPKDEIIELSKELEVEWIELHTGTFANIYAMLYSNLASTHHSIKELELSKSELKTKLSKSIKQIETSSKLAKKLGLKVAAGHGLNYQNVTLISKIPEIEELNIGQSIIARSVFTGLKQAIIDMKELIKND.

Asparagine 6 is a binding site for 3-amino-2-oxopropyl phosphate. Residue 8–9 participates in 1-deoxy-D-xylulose 5-phosphate binding; that stretch reads DH. Arginine 17 provides a ligand contact to 3-amino-2-oxopropyl phosphate. The active-site Proton acceptor is the histidine 42. Arginine 44 and histidine 49 together coordinate 1-deoxy-D-xylulose 5-phosphate. The active-site Proton acceptor is glutamate 69. Threonine 99 is a binding site for 1-deoxy-D-xylulose 5-phosphate. The Proton donor role is filled by histidine 213. Residues glycine 214 and 235 to 236 contribute to the 3-amino-2-oxopropyl phosphate site; that span reads GQ.

Belongs to the PNP synthase family. Homooctamer; tetramer of dimers.

The protein resides in the cytoplasm. The catalysed reaction is 3-amino-2-oxopropyl phosphate + 1-deoxy-D-xylulose 5-phosphate = pyridoxine 5'-phosphate + phosphate + 2 H2O + H(+). It functions in the pathway cofactor biosynthesis; pyridoxine 5'-phosphate biosynthesis; pyridoxine 5'-phosphate from D-erythrose 4-phosphate: step 5/5. Its function is as follows. Catalyzes the complicated ring closure reaction between the two acyclic compounds 1-deoxy-D-xylulose-5-phosphate (DXP) and 3-amino-2-oxopropyl phosphate (1-amino-acetone-3-phosphate or AAP) to form pyridoxine 5'-phosphate (PNP) and inorganic phosphate. This Aliarcobacter butzleri (strain RM4018) (Arcobacter butzleri) protein is Pyridoxine 5'-phosphate synthase.